A 545-amino-acid polypeptide reads, in one-letter code: RNA-directed RNA polymerase beta chain (545 aa).

Residues 243 to 373 (RLAQQGSRDG…PNLRKTFTSG (131 aa)) form the RdRp catalytic domain.

In terms of assembly, part of the viral RNA-dependent RNA polymerase complex, the other subunits are probably the host ribosomal protein S1, EF-Tu and EF-Ts.

The catalysed reaction is RNA(n) + a ribonucleoside 5'-triphosphate = RNA(n+1) + diphosphate. This is the catalytic subunit of the viral RNA-dependent RNA polymerase complex. This complex is involved in viral RNA replication that produces (+)-stranded genomes via a complementary, (-)-stranded intermediate. The polypeptide is RNA-directed RNA polymerase beta chain (Enterobacteria phage fr (Bacteriophage fr)).